The sequence spans 173 residues: Shikimate kinase 1 (173 aa).

Residue 14–19 (GAGKST) coordinates ATP. Residue serine 18 participates in Mg(2+) binding. Substrate contacts are provided by aspartate 36, arginine 60, and glycine 82. Arginine 120 is a binding site for ATP. Arginine 140 lines the substrate pocket. ATP is bound at residue glutamine 157.

It belongs to the shikimate kinase family. In terms of assembly, monomer. The cofactor is Mg(2+).

The protein localises to the cytoplasm. The catalysed reaction is shikimate + ATP = 3-phosphoshikimate + ADP + H(+). It functions in the pathway metabolic intermediate biosynthesis; chorismate biosynthesis; chorismate from D-erythrose 4-phosphate and phosphoenolpyruvate: step 5/7. Functionally, catalyzes the specific phosphorylation of the 3-hydroxyl group of shikimic acid using ATP as a cosubstrate. The chain is Shikimate kinase 1 from Yersinia pseudotuberculosis serotype O:1b (strain IP 31758).